Reading from the N-terminus, the 407-residue chain is 1-deoxy-D-xylulose 5-phosphate reductoisomerase (407 aa).

Positions 25, 26, 27, 28, 53, and 136 each coordinate NADPH. Lysine 137 lines the 1-deoxy-D-xylulose 5-phosphate pocket. Glutamate 138 contributes to the NADPH binding site. Aspartate 162 lines the Mn(2+) pocket. 1-deoxy-D-xylulose 5-phosphate contacts are provided by serine 163, glutamate 164, serine 188, and histidine 211. Glutamate 164 is a Mn(2+) binding site. An NADPH-binding site is contributed by glycine 217. Residues serine 224, asparagine 229, lysine 230, and glutamate 233 each contribute to the 1-deoxy-D-xylulose 5-phosphate site. Mn(2+) is bound at residue glutamate 233.

This sequence belongs to the DXR family. The cofactor is Mg(2+). Requires Mn(2+) as cofactor.

The catalysed reaction is 2-C-methyl-D-erythritol 4-phosphate + NADP(+) = 1-deoxy-D-xylulose 5-phosphate + NADPH + H(+). It participates in isoprenoid biosynthesis; isopentenyl diphosphate biosynthesis via DXP pathway; isopentenyl diphosphate from 1-deoxy-D-xylulose 5-phosphate: step 1/6. In terms of biological role, catalyzes the NADPH-dependent rearrangement and reduction of 1-deoxy-D-xylulose-5-phosphate (DXP) to 2-C-methyl-D-erythritol 4-phosphate (MEP). This chain is 1-deoxy-D-xylulose 5-phosphate reductoisomerase, found in Rhodopseudomonas palustris (strain BisB5).